The following is a 275-amino-acid chain: 3-deoxy-manno-octulosonate cytidylyltransferase (275 aa).

Belongs to the KdsB family.

The protein localises to the cytoplasm. The catalysed reaction is 3-deoxy-alpha-D-manno-oct-2-ulosonate + CTP = CMP-3-deoxy-beta-D-manno-octulosonate + diphosphate. It participates in nucleotide-sugar biosynthesis; CMP-3-deoxy-D-manno-octulosonate biosynthesis; CMP-3-deoxy-D-manno-octulosonate from 3-deoxy-D-manno-octulosonate and CTP: step 1/1. Its pathway is bacterial outer membrane biogenesis; lipopolysaccharide biosynthesis. Activates KDO (a required 8-carbon sugar) for incorporation into bacterial lipopolysaccharide in Gram-negative bacteria. This Psychrobacter sp. (strain PRwf-1) protein is 3-deoxy-manno-octulosonate cytidylyltransferase.